The primary structure comprises 438 residues: tRNA(Ile)-lysidine synthase (438 aa).

19-24 (SGGIDS) provides a ligand contact to ATP.

This sequence belongs to the tRNA(Ile)-lysidine synthase family.

It is found in the cytoplasm. It catalyses the reaction cytidine(34) in tRNA(Ile2) + L-lysine + ATP = lysidine(34) in tRNA(Ile2) + AMP + diphosphate + H(+). Its function is as follows. Ligates lysine onto the cytidine present at position 34 of the AUA codon-specific tRNA(Ile) that contains the anticodon CAU, in an ATP-dependent manner. Cytidine is converted to lysidine, thus changing the amino acid specificity of the tRNA from methionine to isoleucine. The polypeptide is tRNA(Ile)-lysidine synthase (Buchnera aphidicola subsp. Baizongia pistaciae (strain Bp)).